Here is a 172-residue protein sequence, read N- to C-terminus: Trypsin inhibitor DE-3 (172 aa).

Disulfide bonds link cysteine 39/cysteine 83 and cysteine 132/cysteine 139.

This sequence belongs to the protease inhibitor I3 (leguminous Kunitz-type inhibitor) family.

Functionally, inhibition of trypsin. This chain is Trypsin inhibitor DE-3, found in Erythrina caffra (Kaffir tree).